We begin with the raw amino-acid sequence, 193 residues long: Potassium-transporting ATPase KdpC subunit (193 aa).

Residues 14 to 34 traverse the membrane as a helical segment; sequence ITFTFLVLCGLVYPLIVTGIA.

It belongs to the KdpC family. As to quaternary structure, the system is composed of three essential subunits: KdpA, KdpB and KdpC.

Its subcellular location is the cell membrane. Functionally, part of the high-affinity ATP-driven potassium transport (or Kdp) system, which catalyzes the hydrolysis of ATP coupled with the electrogenic transport of potassium into the cytoplasm. This subunit acts as a catalytic chaperone that increases the ATP-binding affinity of the ATP-hydrolyzing subunit KdpB by the formation of a transient KdpB/KdpC/ATP ternary complex. The polypeptide is Potassium-transporting ATPase KdpC subunit (Bacillus anthracis (strain A0248)).